A 214-amino-acid polypeptide reads, in one-letter code: Exosome complex component RRP46 homolog (214 aa).

This sequence belongs to the RNase PH family. As to quaternary structure, homodimer. Component of the RNA exosome complex. Interacts with crn-4; interaction promotes the DNase activity of crn-4. Interacts with crn-3, cps-6 and cyn-13.

It localises to the cytoplasm. It is found in the nucleus. Functionally, non-catalytic component of the RNA exosome complex which has 3'-&gt;5' exoribonuclease activity and participates in a multitude of cellular RNA processing and degradation events. Involved in apoptotic DNA degradation. In vitro, does not bind or digest single-stranded RNA. In vitro, binds to double-stranded DNA without detectable DNase activity. The chain is Exosome complex component RRP46 homolog from Caenorhabditis elegans.